We begin with the raw amino-acid sequence, 215 residues long: MKAFTQHTGLVCPLDRANVDTDQIIPKQFLKSIKRTGFGPNLFDEWRYLDVGQPNQDCSQRPLNKDFVLNFPRYQGASVLLARENFGCGSSREHAPWALEEYGFRAIIAPSFADIFYNNSFKNGLLPIVLKEEEVDELFQQAEATEGYQLTVDLAAQTVTRPDGKQYGFEVDAFRKHCLLNGLDDIGLTLQDAEAIKAFEVRHQQSQPWLFGAIK.

It belongs to the LeuD family. LeuD type 1 subfamily. As to quaternary structure, heterodimer of LeuC and LeuD.

The enzyme catalyses (2R,3S)-3-isopropylmalate = (2S)-2-isopropylmalate. It functions in the pathway amino-acid biosynthesis; L-leucine biosynthesis; L-leucine from 3-methyl-2-oxobutanoate: step 2/4. Catalyzes the isomerization between 2-isopropylmalate and 3-isopropylmalate, via the formation of 2-isopropylmaleate. This chain is 3-isopropylmalate dehydratase small subunit, found in Stutzerimonas stutzeri (strain A1501) (Pseudomonas stutzeri).